Consider the following 405-residue polypeptide: MCSRVWFITDRRISQEYPQIQILRALKERCVEDDVEFRYLLMDEIVLTITDGQLGLRVGQEIVTSYPQVAVVRVPTPWVQSDSDITVLRHLEKMGCRLVNRPQAILNCVNKFWTFQELAGHGVPLPDTYSYGGHDNFRKMIDEAEPLGYPVVVKNARGHRGKAVFLARDKHHLSDLCHLIRHEAPYLFQEYVKESHGRDVRVVLVGGRVIGSMLRCSTDGRMQSNCSLGGVGMMCPLSEQGKQLAVQVCNILGMDVCGIDLLQKNDGSFVVCEANANVGFIAFDQACGMDVAGIVADFVLSLLPSRLSRKMSLLSVVSSTSETSSEPEVCIPTEVIIPSEVCIPNEICPLGTTCPIPDAMSTMSTSSTSSESEADLTETGPTPVGANPAYNINSLLASEMKLLTE.

Positions 115 to 300 constitute an ATP-grasp domain; it reads FQELAGHGVP…VAGIVADFVL (186 aa). ATP-binding positions include K154, 189–199, and R215; that span reads QEYVKESHGRD. 3 residues coordinate Mg(2+): D260, E273, and N275. Mn(2+) is bound by residues D260, E273, and N275. The segment at 359–387 is disordered; it reads AMSTMSTSSTSSESEADLTETGPTPVGAN. A compositionally biased stretch (low complexity) spans 360–371; that stretch reads MSTMSTSSTSSE.

It belongs to the RimK family. It depends on Mg(2+) as a cofactor. Requires Mn(2+) as cofactor.

It is found in the cytoplasm. It carries out the reaction citrate + L-glutamate + ATP = beta-citrylglutamate + ADP + phosphate + H(+). It catalyses the reaction N-acetyl-L-aspartate + L-glutamate + ATP = N-acetyl-L-aspartyl-L-glutamate + ADP + phosphate + H(+). Catalyzes the synthesis of beta-citryl-L-glutamate and N-acetyl-L-aspartyl-L-glutamate. Beta-citryl-L-glutamate is synthesized more efficiently than N-acetyl-L-aspartyl-L-glutamate. The sequence is that of Beta-citrylglutamate synthase B (rimklb) from Danio rerio (Zebrafish).